A 147-amino-acid polypeptide reads, in one-letter code: Cyanate hydratase (147 aa).

Active-site residues include Arg88, Glu91, and Ser114.

The protein belongs to the cyanase family.

It catalyses the reaction cyanate + hydrogencarbonate + 3 H(+) = NH4(+) + 2 CO2. In terms of biological role, catalyzes the reaction of cyanate with bicarbonate to produce ammonia and carbon dioxide. The polypeptide is Cyanate hydratase (Prochlorococcus marinus (strain NATL2A)).